The primary structure comprises 324 residues: Cyclic GMP-AMP synthase CdnE03 (324 aa).

Mg(2+) is bound by residues D87 and D89. Residues D89, 144-145, and D159 contribute to the ATP site; that span reads NK. D159 contacts Mg(2+). The GTP site is built by K224 and S243.

It belongs to the CD-NTase family. E03 subfamily. Mg(2+) serves as cofactor.

It carries out the reaction GTP + ATP = 3',2'-cGAMP + 2 diphosphate. Its activity is regulated as follows. Activated by a virus-derived, approximately 400 nucleotide RNA (called CBASS-activating bacteriophage RNA, cabRNA) that begins in the viral terminase subunit terS and extends into terL. RNA secondary and/or tertiary structure, as well as viral infection itself, are important for CdnE activation. A much longer RNA (escaper RNA) with a different secondary structure, derived from a terS-mutated virus still binds to this protein, but does not activate its nucleotide cyclase activity. Shorter viral-derived RNAs (34 and 49 nt) with extensive predicted secondary structure also activate the enzyme, although not as well as full-length cabRNA. Functionally, cyclic nucleotide synthase (second messenger synthase) of a CBASS antivirus system. CBASS (cyclic oligonucleotide-based antiphage signaling system) provides immunity against bacteriophage. The CD-NTase protein synthesizes cyclic nucleotides in response to infection; these serve as specific second messenger signals. The signals activate a diverse range of effectors, leading to bacterial cell death and thus abortive phage infection. The effector for this system is downstream Cap15. A type I-B CBASS system. Its function is as follows. Cyclic dinucleotide synthase that catalyzes the synthesis of 3',2'-cyclic GMP-AMP (cGAMP) from GTP and ATP upon activation by viral-derived cabRNA. Binds cabRNA via positive charges in its N-terminus. Protects S.aureus against phage infection. When the CBASS operon (cdnE-cap15) is introduced in S.aureus strain RN4220 there is strong protection against lytic DNA phages 80alpha-vir and phi-NM1-gamma-6 but little to no protection against phages phi-NM4-gamma-4 or phi-12-gamma-3. The protein is Cyclic GMP-AMP synthase CdnE03 of Staphylococcus schleiferi.